Reading from the N-terminus, the 117-residue chain is Large ribosomal subunit protein bL19 (117 aa).

The protein belongs to the bacterial ribosomal protein bL19 family.

In terms of biological role, this protein is located at the 30S-50S ribosomal subunit interface and may play a role in the structure and function of the aminoacyl-tRNA binding site. The sequence is that of Large ribosomal subunit protein bL19 from Rhodopirellula baltica (strain DSM 10527 / NCIMB 13988 / SH1).